A 218-amino-acid chain; its full sequence is Ribose-5-phosphate isomerase A (218 aa).

Substrate is bound by residues Thr-28 to Thr-31, Asp-81 to Asp-84, and Lys-94 to Gly-97. The active-site Proton acceptor is Glu-103. Lys-121 serves as a coordination point for substrate.

It belongs to the ribose 5-phosphate isomerase family. As to quaternary structure, homodimer.

The catalysed reaction is aldehydo-D-ribose 5-phosphate = D-ribulose 5-phosphate. The protein operates within carbohydrate degradation; pentose phosphate pathway; D-ribose 5-phosphate from D-ribulose 5-phosphate (non-oxidative stage): step 1/1. In terms of biological role, catalyzes the reversible conversion of ribose-5-phosphate to ribulose 5-phosphate. This chain is Ribose-5-phosphate isomerase A, found in Aliivibrio fischeri (strain ATCC 700601 / ES114) (Vibrio fischeri).